The chain runs to 208 residues: LexA repressor (208 aa).

A DNA-binding region (H-T-H motif) is located at residues 28–48 (VREIGEAVGLASSSTVHGHLA). Residues S130 and K168 each act as for autocatalytic cleavage activity in the active site.

This sequence belongs to the peptidase S24 family. In terms of assembly, homodimer.

The catalysed reaction is Hydrolysis of Ala-|-Gly bond in repressor LexA.. Functionally, represses a number of genes involved in the response to DNA damage (SOS response), including recA and lexA. In the presence of single-stranded DNA, RecA interacts with LexA causing an autocatalytic cleavage which disrupts the DNA-binding part of LexA, leading to derepression of the SOS regulon and eventually DNA repair. In Shouchella clausii (strain KSM-K16) (Alkalihalobacillus clausii), this protein is LexA repressor.